Here is an 89-residue protein sequence, read N- to C-terminus: Protein S100-A8 (89 aa).

EF-hand domains lie at 12–47 and 46–81; these read LIDV…KFMK and MKKK…VGLE. 2 residues coordinate Zn(2+): His17 and His27. Position 33 (Asp33) interacts with Ca(2+). Cys42 carries the S-nitrosocysteine modification. Ca(2+) contacts are provided by Asp59, Asn61, Asp63, and Glu70. His83 contacts Zn(2+).

This sequence belongs to the S-100 family. In terms of assembly, homodimer. Preferentially exists as a heterodimer or heterotetramer with S100A9 known as calprotectin (S100A8/A9). S100A8 interacts with AGER, ATP2A2 and with the heterodimeric complex formed by TLR4 and LY96. Calprotectin (S100A8/9) interacts with CEACAM3 and tubulin filaments in a calcium-dependent manner. Heterotetrameric calprotectin (S100A8/A9) interacts with ANXA6 and associates with tubulin filaments in activated monocytes. S100A8 and calprotectin (S100A8/9) interact with NCF2/P67PHOX, RAC1 and RAC2. Calprotectin (S100A8/9) interacts with CYBA and CYBB. Calprotectin (S100A8/9) interacts with NOS2 to form the iNOS-S100A8/A9 transnitrosylase complex. Calprotectin (S100A8/9) interacts with CD69. As to expression, found essentially in phagocytic cells.

Its subcellular location is the secreted. It is found in the cytoplasm. It localises to the cytoskeleton. The protein resides in the cell membrane. Functionally, S100A8 is a calcium- and zinc-binding protein which plays a prominent role in the regulation of inflammatory processes and immune response. It can induce neutrophil chemotaxis and adhesion. Predominantly found as calprotectin (S100A8/A9) which has a wide plethora of intra- and extracellular functions. The intracellular functions include: facilitating leukocyte arachidonic acid trafficking and metabolism, modulation of the tubulin-dependent cytoskeleton during migration of phagocytes and activation of the neutrophilic NADPH-oxidase. Also participates in regulatory T-cell differentiation together with CD69. Activates NADPH-oxidase by facilitating the enzyme complex assembly at the cell membrane, transferring arachidonic acid, an essential cofactor, to the enzyme complex and S100A8 contributes to the enzyme assembly by directly binding to NCF2/P67PHOX. The extracellular functions involve pro-inflammatory, antimicrobial, oxidant-scavenging and apoptosis-inducing activities. Its pro-inflammatory activity includes recruitment of leukocytes, promotion of cytokine and chemokine production, and regulation of leukocyte adhesion and migration. Acts as an alarmin or a danger associated molecular pattern (DAMP) molecule and stimulates innate immune cells via binding to pattern recognition receptors such as Toll-like receptor 4 (TLR4) and receptor for advanced glycation endproducts (AGER). Binding to TLR4 and AGER activates the MAP-kinase and NF-kappa-B signaling pathways resulting in the amplification of the pro-inflammatory cascade. Has antimicrobial activity towards bacteria and fungi and exerts its antimicrobial activity probably via chelation of Zn(2+) which is essential for microbial growth. Can induce cell death via autophagy and apoptosis and this occurs through the cross-talk of mitochondria and lysosomes via reactive oxygen species (ROS) and the process involves BNIP3. Can regulate neutrophil number and apoptosis by an anti-apoptotic effect; regulates cell survival via ITGAM/ITGB and TLR4 and a signaling mechanism involving MEK-ERK. Its role as an oxidant scavenger has a protective role in preventing exaggerated tissue damage by scavenging oxidants. The iNOS-S100A8/A9 transnitrosylase complex is proposed to direct selective inflammatory stimulus-dependent S-nitrosylation of multiple targets such as GAPDH, ANXA5, EZR, MSN and VIM by recognizing a [IL]-x-C-x-x-[DE] motif; S100A8 seems to contribute to S-nitrosylation site selectivity. This chain is Protein S100-A8 (S100A8), found in Bos taurus (Bovine).